Here is a 586-residue protein sequence, read N- to C-terminus: A-type ATP synthase subunit A (586 aa).

Residue 232–239 coordinates ATP; sequence GPFGSGKT.

Belongs to the ATPase alpha/beta chains family. In terms of assembly, has multiple subunits with at least A(3), B(3), C, D, E, F, H, I and proteolipid K(x).

Its subcellular location is the cell membrane. The catalysed reaction is ATP + H2O + 4 H(+)(in) = ADP + phosphate + 5 H(+)(out). Component of the A-type ATP synthase that produces ATP from ADP in the presence of a proton gradient across the membrane. The A chain is the catalytic subunit. The sequence is that of A-type ATP synthase subunit A from Methanococcus vannielii (strain ATCC 35089 / DSM 1224 / JCM 13029 / OCM 148 / SB).